The following is a 451-amino-acid chain: MTSISKRKNQQEHIPAEDLETPKLPKREKIEGTKESNKVRIIILLGYSGYGYHGIQINNPLKTIEGDVVAVLKKLGYLKTNNIDAEHLCIARAARTDKGVHTLRNLISLNLFVDKPLDISLLKTELNEALCSQIRVWSVFPAPKYFNPRISCESRTYEYLIPSFALLPPKPSCPLFKKMQKNLSRKLDNELERNLVYSMNDLISFWNTVKLKQKEIQEMFDTNKDAFTNPFKGMFYEKPIPAGIVIPPQAKLKKALKQAEYYCYMNYRIKEDRLKVLQQLLKKYEGRHNFHNFTVTDDSTSPSNYRFIESVTCGTPFVYENWEWIPVTIKGNSFMLNQIRKMMAHVLMIIRSCAPTGLIDKAFDPNITMNISKSPGHVLLLKDIKFSSYNDSVTDGLEKIQFDCFEEDILSLKIKTIYPDIIKLEQKEKLFFSFLSYIDQHTGHQFDYLFG.

The disordered stretch occupies residues 1–30 (MTSISKRKNQQEHIPAEDLETPKLPKREKI). The segment covering 9-30 (NQQEHIPAEDLETPKLPKREKI) has biased composition (basic and acidic residues). D97 acts as the Nucleophile in catalysis. Y157 contacts substrate.

The protein belongs to the tRNA pseudouridine synthase TruA family. It depends on Zn(2+) as a cofactor.

It is found in the nucleus. The catalysed reaction is a uridine in tRNA = a pseudouridine in tRNA. Formation of pseudouridine at positions 27 and 28 in the anticodon stem and loop of transfer RNAs; at positions 34 and 36 of intron-containing precursor tRNA(Ile) and at position 35 in the intron-containing tRNA(Tyr). The sequence is that of tRNA pseudouridine synthase 2 (pus2) from Schizosaccharomyces pombe (strain 972 / ATCC 24843) (Fission yeast).